The following is a 263-amino-acid chain: uncharacterized protein (263 aa).

Residues 183–263 are disordered; that stretch reads APHDRPEGVP…PPSTNTKGAA (81 aa). 2 stretches are compositionally biased toward polar residues: residues 230 to 239 and 253 to 263; these read SRPTAPSRPS and TPPSTNTKGAA.

In terms of biological role, probably does not play a direct role in plasmid integration or excision. This is an uncharacterized protein from Saccharopolyspora erythraea (Streptomyces erythraeus).